Reading from the N-terminus, the 321-residue chain is Sphingolipid delta(4)-desaturase DES1 (321 aa).

6 consecutive transmembrane segments (helical) span residues 41–61 (PNFK…LFVV), 68–88 (WLIV…MLAV), 107–127 (ILGF…FKKY), 157–177 (FGKF…PLII), 187–206 (IINT…FLGW), and 208–230 (PLAY…GHFI).

This sequence belongs to the fatty acid desaturase type 1 family. DEGS subfamily. In terms of tissue distribution, testes.

Its subcellular location is the endoplasmic reticulum membrane. It localises to the membrane. It is found in the mitochondrion. It catalyses the reaction an N-acylsphinganine + 2 Fe(II)-[cytochrome b5] + O2 + 2 H(+) = an N-acylsphing-4-enine + 2 Fe(III)-[cytochrome b5] + 2 H2O. The catalysed reaction is an N-acyleicosasphinganine + 2 Fe(II)-[cytochrome b5] + O2 + 2 H(+) = an N-acyleicosasphing-4-enine + 2 Fe(III)-[cytochrome b5] + 2 H2O. It participates in sphingolipid metabolism. Functionally, has sphingolipid-delta-4-desaturase activity. Converts sphinganine-containing sphingolipids (such as N-acylsphinganines or dihydroceramides) into sphingolipids containing the delta-4-desaturated sphingoid base (E)-sphing-4-enine (such as N-acylsphing-4-enines or ceramides), which are required for many different functions (structural functions as well as signaling). Required to initiate spermatid differentiation among other signals. Required for central spindle assembly and cytokinesis during male meiosis, may act as part of an anchoring mechanism that links membrane-bounded cellular compartments to components of the cytoskeleton. This chain is Sphingolipid delta(4)-desaturase DES1, found in Drosophila melanogaster (Fruit fly).